The following is a 252-amino-acid chain: Ubiquinone/menaquinone biosynthesis C-methyltransferase UbiE (252 aa).

S-adenosyl-L-methionine-binding positions include Thr-71, Asp-100, 124-125 (DA), and Ser-141.

It belongs to the class I-like SAM-binding methyltransferase superfamily. MenG/UbiE family.

It carries out the reaction a 2-demethylmenaquinol + S-adenosyl-L-methionine = a menaquinol + S-adenosyl-L-homocysteine + H(+). The enzyme catalyses a 2-methoxy-6-(all-trans-polyprenyl)benzene-1,4-diol + S-adenosyl-L-methionine = a 5-methoxy-2-methyl-3-(all-trans-polyprenyl)benzene-1,4-diol + S-adenosyl-L-homocysteine + H(+). The protein operates within quinol/quinone metabolism; menaquinone biosynthesis; menaquinol from 1,4-dihydroxy-2-naphthoate: step 2/2. It functions in the pathway cofactor biosynthesis; ubiquinone biosynthesis. Functionally, methyltransferase required for the conversion of demethylmenaquinol (DMKH2) to menaquinol (MKH2) and the conversion of 2-polyprenyl-6-methoxy-1,4-benzoquinol (DDMQH2) to 2-polyprenyl-3-methyl-6-methoxy-1,4-benzoquinol (DMQH2). The polypeptide is Ubiquinone/menaquinone biosynthesis C-methyltransferase UbiE (Caulobacter vibrioides (strain ATCC 19089 / CIP 103742 / CB 15) (Caulobacter crescentus)).